A 908-amino-acid polypeptide reads, in one-letter code: 3-phosphoinositide-dependent protein kinase B (908 aa).

Composition is skewed to low complexity over residues 53–170, 179–189, and 200–216; these read NNNF…SSSL, YSDSSDSIDSY, and QQQQ…QPLH. A disordered region spans residues 53–267; that stretch reads NNNFNNNNNN…PNSSIPHKKS (215 aa). Polar residues predominate over residues 250-262; sequence KTSSFGLQPNSSI. The region spanning 271-527 is the Protein kinase domain; the sequence is FDFIRTIGKG…ISEIKNHEFF (257 aa). ATP-binding positions include 281–283 and Lys300; that span reads AYG. Positions 302–346 are PIF-pocket; that stretch reads LNKKLIIKEKKAKYVNTEKTILDSLDNPNIVKLFYTFQDENNLYF. Residues 349 to 351 and Asp355 contribute to the ATP site; that span reads EYC. Asp394 serves as the catalytic Proton acceptor. Residues Glu398 and Asp412 each contribute to the ATP site. 2 disordered regions span residues 538–560 and 606–755; these read SQTP…NSSL and ISNN…KNLQ. Over residues 607–684 the composition is skewed to low complexity; that stretch reads SNNNNNNNNT…PAYSSTPSST (78 aa). The segment covering 696–709 has biased composition (polar residues); the sequence is SSCSSNNLLGKSSN. The segment covering 710 to 741 has biased composition (low complexity); sequence QQYQPFQFHQQQQQQQQQQQRERSSTTTPSPT. The region spanning 764-902 is the PH domain; sequence SSFSTSSPMS…KLWVDLINEL (139 aa).

This sequence belongs to the protein kinase superfamily. AGC Ser/Thr protein kinase family. PDPK1 subfamily.

The enzyme catalyses L-seryl-[protein] + ATP = O-phospho-L-seryl-[protein] + ADP + H(+). It carries out the reaction L-threonyl-[protein] + ATP = O-phospho-L-threonyl-[protein] + ADP + H(+). The protein is 3-phosphoinositide-dependent protein kinase B (pdkB) of Dictyostelium discoideum (Social amoeba).